The following is a 305-amino-acid chain: Endonuclease III-like protein 1 (305 aa).

The N-terminal 28 residues, Met-1 to Lys-28, are a transit peptide targeting the mitochondrion. Residues Met-1–Gln-83 are disordered. Ser-64 is modified (phosphoserine). The HhH domain occupies Arg-192 to His-216. Lys-213 (nucleophile; for N-glycosylase activity) is an active-site residue. 4 residues coordinate [4Fe-4S] cluster: Cys-283, Cys-290, Cys-293, and Cys-299.

Belongs to the Nth/MutY family. Interacts with YBX1. Interacts with ERCC5/XPG; the interaction stimulates NTHL1 activity and NTHL1 binding to its DNA substrate. The cofactor is [4Fe-4S] cluster.

It localises to the nucleus. Its subcellular location is the mitochondrion. It carries out the reaction 2'-deoxyribonucleotide-(2'-deoxyribose 5'-phosphate)-2'-deoxyribonucleotide-DNA = a 3'-end 2'-deoxyribonucleotide-(2,3-dehydro-2,3-deoxyribose 5'-phosphate)-DNA + a 5'-end 5'-phospho-2'-deoxyribonucleoside-DNA + H(+). In terms of biological role, bifunctional DNA N-glycosylase with associated apurinic/apyrimidinic (AP) lyase function that catalyzes the first step in base excision repair (BER), the primary repair pathway for the repair of oxidative DNA damage. The DNA N-glycosylase activity releases the damaged DNA base from DNA by cleaving the N-glycosidic bond, leaving an AP site. The AP lyase activity cleaves the phosphodiester bond 3' to the AP site by a beta-elimination. Primarily recognizes and repairs oxidative base damage of pyrimidines. This chain is Endonuclease III-like protein 1, found in Bos taurus (Bovine).